A 568-amino-acid chain; its full sequence is 2-succinyl-5-enolpyruvyl-6-hydroxy-3-cyclohexene-1-carboxylate synthase (568 aa).

It belongs to the TPP enzyme family. MenD subfamily. As to quaternary structure, homodimer. Mg(2+) serves as cofactor. The cofactor is Mn(2+). Requires thiamine diphosphate as cofactor.

It catalyses the reaction isochorismate + 2-oxoglutarate + H(+) = 5-enolpyruvoyl-6-hydroxy-2-succinyl-cyclohex-3-ene-1-carboxylate + CO2. It functions in the pathway quinol/quinone metabolism; 1,4-dihydroxy-2-naphthoate biosynthesis; 1,4-dihydroxy-2-naphthoate from chorismate: step 2/7. Its pathway is cofactor biosynthesis; phylloquinone biosynthesis. Functionally, catalyzes the thiamine diphosphate-dependent decarboxylation of 2-oxoglutarate and the subsequent addition of the resulting succinic semialdehyde-thiamine pyrophosphate anion to isochorismate to yield 2-succinyl-5-enolpyruvyl-6-hydroxy-3-cyclohexene-1-carboxylate (SEPHCHC). The polypeptide is 2-succinyl-5-enolpyruvyl-6-hydroxy-3-cyclohexene-1-carboxylate synthase (Synechococcus sp. (strain CC9902)).